Consider the following 122-residue polypeptide: Large ribosomal subunit protein uL14 (122 aa).

The protein belongs to the universal ribosomal protein uL14 family. Part of the 50S ribosomal subunit. Forms a cluster with proteins L3 and L19. In the 70S ribosome, L14 and L19 interact and together make contacts with the 16S rRNA in bridges B5 and B8.

In terms of biological role, binds to 23S rRNA. Forms part of two intersubunit bridges in the 70S ribosome. This chain is Large ribosomal subunit protein uL14, found in Chloroherpeton thalassium (strain ATCC 35110 / GB-78).